A 209-amino-acid chain; its full sequence is Imidazole glycerol phosphate synthase subunit HisH (209 aa).

The region spanning 3–209 (KIAIIDYGMG…SILKNFGEMK (207 aa)) is the Glutamine amidotransferase type-1 domain. The active-site Nucleophile is C81. Catalysis depends on residues H190 and E192.

In terms of assembly, heterodimer of HisH and HisF.

It localises to the cytoplasm. The catalysed reaction is 5-[(5-phospho-1-deoxy-D-ribulos-1-ylimino)methylamino]-1-(5-phospho-beta-D-ribosyl)imidazole-4-carboxamide + L-glutamine = D-erythro-1-(imidazol-4-yl)glycerol 3-phosphate + 5-amino-1-(5-phospho-beta-D-ribosyl)imidazole-4-carboxamide + L-glutamate + H(+). It catalyses the reaction L-glutamine + H2O = L-glutamate + NH4(+). The protein operates within amino-acid biosynthesis; L-histidine biosynthesis; L-histidine from 5-phospho-alpha-D-ribose 1-diphosphate: step 5/9. In terms of biological role, IGPS catalyzes the conversion of PRFAR and glutamine to IGP, AICAR and glutamate. The HisH subunit catalyzes the hydrolysis of glutamine to glutamate and ammonia as part of the synthesis of IGP and AICAR. The resulting ammonia molecule is channeled to the active site of HisF. The chain is Imidazole glycerol phosphate synthase subunit HisH from Geobacter sulfurreducens (strain ATCC 51573 / DSM 12127 / PCA).